Reading from the N-terminus, the 672-residue chain is Poly-beta-1,6-N-acetyl-D-glucosamine N-deacetylase (672 aa).

The first 20 residues, 1–20, serve as a signal peptide directing secretion; sequence MLRNGNKYLLMLVSIIMLTA. Cys21 is lipidated: N-palmitoyl cysteine. Cys21 is lipidated: S-diacylglycerol cysteine. Residues 107 to 349 enclose the NodB homology domain; sequence KAVVLTFDDG…IQRVKDMQIS (243 aa).

The protein belongs to the polysaccharide deacetylase family.

It localises to the cell outer membrane. Functionally, catalyzes the N-deacetylation of poly-beta-1,6-N-acetyl-D-glucosamine (PGA), a biofilm adhesin polysaccharide. N-deacetylation promotes PGA export through the PgaA porin. This chain is Poly-beta-1,6-N-acetyl-D-glucosamine N-deacetylase (pgaB), found in Escherichia coli O157:H7.